Here is a 566-residue protein sequence, read N- to C-terminus: 4-coumarate--CoA ligase-like 6 (566 aa).

The interval 1–21 (MAATHLHIPPNPKTQTSHQNP) is disordered. Residues serine 212, serine 213, glycine 214, threonine 215, threonine 216, and lysine 220 each coordinate ATP. (E)-4-coumaroyl-AMP is bound at residue tyrosine 263. Arginine 284 contributes to the CoA binding site. Residues 286 to 356 (DASDVVNVIE…QTLPHVDLIQ (71 aa)) form an SBD1 region. Residues alanine 334, glutamine 356, glycine 357, and threonine 361 each coordinate (E)-4-coumaroyl-AMP. The ATP site is built by glutamine 356, glycine 357, threonine 361, aspartate 442, and arginine 457. Residues 357 to 421 (GYGMTESTAV…IQGPGVMKGY (65 aa)) are SBD2. The (E)-4-coumaroyl-AMP site is built by lysine 459 and lysine 463. CoA-binding residues include lysine 465 and glycine 466. Residue lysine 548 participates in ATP binding. The short motif at 564 to 566 (SRL) is the Microbody targeting signal element.

This sequence belongs to the ATP-dependent AMP-binding enzyme family. The cofactor is Mg(2+). As to expression, expressed at very low level in leaves.

It localises to the peroxisome. It catalyses the reaction (E)-4-coumarate + ATP + CoA = (E)-4-coumaroyl-CoA + AMP + diphosphate. It carries out the reaction (E)-4-coumarate + ATP + H(+) = (E)-4-coumaroyl-AMP + diphosphate. The catalysed reaction is (E)-4-coumaroyl-AMP + CoA = (E)-4-coumaroyl-CoA + AMP + H(+). The enzyme catalyses (E)-ferulate + ATP + CoA = (E)-feruloyl-CoA + AMP + diphosphate. It catalyses the reaction (E)-ferulate + ATP + H(+) = (E)-feruloyl-AMP + diphosphate. It carries out the reaction (E)-feruloyl-AMP + CoA = (E)-feruloyl-CoA + AMP + H(+). The catalysed reaction is (E)-caffeate + ATP + CoA = (E)-caffeoyl-CoA + AMP + diphosphate. The enzyme catalyses (E)-caffeate + ATP + H(+) = (E)-caffeoyl-AMP + diphosphate. It catalyses the reaction (E)-caffeoyl-AMP + CoA = (E)-caffeoyl-CoA + AMP + H(+). It carries out the reaction (E)-cinnamate + ATP + CoA = (E)-cinnamoyl-CoA + AMP + diphosphate. The catalysed reaction is 4-hydroxybenzoate + ATP + CoA = 4-hydroxybenzoyl-CoA + AMP + diphosphate. The enzyme catalyses tetradecanoate + ATP + CoA = tetradecanoyl-CoA + AMP + diphosphate. It catalyses the reaction hexanoate + ATP + CoA = hexanoyl-CoA + AMP + diphosphate. It carries out the reaction heptanoate + ATP + CoA = heptanoyl-CoA + AMP + diphosphate. In terms of biological role, contributes to jasmonic acid biosynthesis by initiating the beta-oxidative chain shortening of its precursors. Acts as a carboxylate--CoA ligase that can use preferentially p-coumarate, ferulate and caffeate as substrates and, with a lower efficiency, (E)-cinnamate and 4-hydroxybenzoate as substrates. Involved in the biosynthesis of ubiquinone from phenylalanine by activating the propyl side chain of 4-coumarate, and possibly trans-cinnamate and 4-hydroxybenzoate, for subsequent beta-oxidative shortening and the formation of the benzenoid moiety of ubiquinone. Follows a two-step reaction mechanism, wherein the carboxylate substrate first undergoes adenylation by ATP, followed by a thioesterification in the presence of CoA to yield the final CoA thioester. This is 4-coumarate--CoA ligase-like 6 from Arabidopsis thaliana (Mouse-ear cress).